We begin with the raw amino-acid sequence, 640 residues long: Probable serine/threonine-protein kinase samkA (640 aa).

In terms of domain architecture, SAM spans 21–84 (WNNEKIIKWL…SEFEILKNNY (64 aa)). Residues 73–100 (FKSEFEILKNNYDNNNNNNNNNNNNNNN) are a coiled coil. The tract at residues 84 to 165 (YDNNNNNNNN…INFNSNSNIT (82 aa)) is disordered. In terms of domain architecture, Protein kinase spans 191-437 (YEYVESISLG…SKDLQKLSWF (247 aa)). Residues 197–205 (ISLGVFSVV) and K221 contribute to the ATP site. D312 acts as the Proton acceptor in catalysis. A disordered region spans residues 448–482 (QELTKSTTNTTTTTTTTTTPPPPPSPSSSSPSMNE). A compositionally biased stretch (low complexity) spans 453–465 (STTNTTTTTTTTT).

Belongs to the protein kinase superfamily. Ser/Thr protein kinase family.

It carries out the reaction L-seryl-[protein] + ATP = O-phospho-L-seryl-[protein] + ADP + H(+). The enzyme catalyses L-threonyl-[protein] + ATP = O-phospho-L-threonyl-[protein] + ADP + H(+). In Dictyostelium discoideum (Social amoeba), this protein is Probable serine/threonine-protein kinase samkA (samkA).